Here is a 197-residue protein sequence, read N- to C-terminus: dITP/XTP pyrophosphatase (197 aa).

Residue 10-15 participates in substrate binding; it reads SHNGGK. Mg(2+)-binding residues include Glu-41 and Asp-70. Residue Asp-70 is the Proton acceptor of the active site. Residues Ser-71, 154–157, Lys-177, and 182–183 contribute to the substrate site; these read FGYD and HR.

The protein belongs to the HAM1 NTPase family. In terms of assembly, homodimer. Mg(2+) serves as cofactor.

It catalyses the reaction XTP + H2O = XMP + diphosphate + H(+). The catalysed reaction is dITP + H2O = dIMP + diphosphate + H(+). It carries out the reaction ITP + H2O = IMP + diphosphate + H(+). In terms of biological role, pyrophosphatase that catalyzes the hydrolysis of nucleoside triphosphates to their monophosphate derivatives, with a high preference for the non-canonical purine nucleotides XTP (xanthosine triphosphate), dITP (deoxyinosine triphosphate) and ITP. Seems to function as a house-cleaning enzyme that removes non-canonical purine nucleotides from the nucleotide pool, thus preventing their incorporation into DNA/RNA and avoiding chromosomal lesions. This Pseudomonas syringae pv. tomato (strain ATCC BAA-871 / DC3000) protein is dITP/XTP pyrophosphatase.